We begin with the raw amino-acid sequence, 262 residues long: tRNA pseudouridine synthase A (262 aa).

Aspartate 52 functions as the Nucleophile in the catalytic mechanism. Tyrosine 103 serves as a coordination point for substrate.

This sequence belongs to the tRNA pseudouridine synthase TruA family.

It carries out the reaction uridine(38/39/40) in tRNA = pseudouridine(38/39/40) in tRNA. In terms of biological role, formation of pseudouridine at positions 38, 39 and 40 in the anticodon stem and loop of transfer RNAs. The polypeptide is tRNA pseudouridine synthase A (Methanococcus maripaludis (strain C6 / ATCC BAA-1332)).